Consider the following 331-residue polypeptide: Probable cytosolic iron-sulfur protein assembly protein Ciao1 (331 aa).

WD repeat units follow at residues 12–51, 57–96, 97–136, 142–181, 188–227, 246–285, and 297–331; these read GHKGRIWGVAWHPKGNSFASCGEDKAIRIWSQSGNTWTTK, GHKRTIREVRWSPCGEYLASASFDATTAIWSKHECNATLE, GHENEVKSVSWSQSGGLLATCSRDKSVWIWEVAGDDEFEC, AHTQDVKRVVWHPSKEILASASYDNTIKMYAESALDSDWD, SHTSTVWSIDFEADGERLVSCSDDTTLKIWRAYHPGNEAG, QHSRAVYDVSWCKLTGLIASACGDDGIRIFKESSDSKRDE, and AHEQDVNAVEWNPVTAGQLISCSDDGTIKIWKLQE.

It belongs to the WD repeat CIA1 family.

Its function is as follows. Essential component of the cytosolic iron-sulfur (Fe/S) protein assembly machinery. Required for the maturation of extramitochondrial Fe/S proteins. This is Probable cytosolic iron-sulfur protein assembly protein Ciao1 from Drosophila grimshawi (Hawaiian fruit fly).